The primary structure comprises 745 residues: Protein transport protein SEC23 D (745 aa).

Positions 53, 56, 73, and 76 each coordinate Zn(2+). A zinc finger-like region spans residues 53-76 (CENCYAYFNTYCELDQWAWNCSLC).

The protein belongs to the SEC23/SEC24 family. SEC24 subfamily. In terms of assembly, component of the coat protein complex II (COPII), composed of at least five proteins: the Sec23/24 complex, the Sec13/31 complex and Sar1. As to expression, mostly expressed in closed floral bud, pollen and flowers, and, to a lower extent, in mature siliques, roots and leaf primordia.

It localises to the cytoplasmic vesicle. The protein resides in the COPII-coated vesicle membrane. Its subcellular location is the endoplasmic reticulum membrane. It is found in the membrane. In terms of biological role, component of the coat protein complex II (COPII) which promotes the formation of transport vesicles from the endoplasmic reticulum (ER). The coat has two main functions, the physical deformation of the endoplasmic reticulum membrane into vesicles and the selection of cargo molecules. May contribute to COPII-coated vesicles formation and ER-Golgi vesicle transport. Together with SEC23A, essential for pollen wall development and exine patterning, probably by regulating endoplasmic reticulum (ER) export of lipids and proteins (e.g. sporopollenin) necessary for pollen wall formation. Also involved in plastid physiology in anther tapetal cells. The protein is Protein transport protein SEC23 D of Arabidopsis thaliana (Mouse-ear cress).